Consider the following 114-residue polypeptide: Ig heavy chain V region (114 aa).

The 106-residue stretch at 1–106 (EVQLQQSGAE…AVRVISRYFD (106 aa)) folds into the Ig-like domain.

The sequence is that of Ig heavy chain V region from Mus musculus (Mouse).